Consider the following 326-residue polypeptide: Target of rapamycin complex subunit lst8 (326 aa).

7 WD repeats span residues 1–37, 40–80, 83–122, 126–165, 168–207, 218–257, and 268–309; these read MNSNQGTVGSDPVILATAGYDHTVRFWQAHSGICTRT, HQDS…PVIN, GVSKNITSVGFHEDGRWMYTGGEDCMARIWDLRSRNLQCQ, QVNAPINCVFLHPNQAELIVGDQSGAIHIWDLKTDQNEQL, ETDVSINSVHIDPDASYMAAVNSSGNCFVWNLTGGLGEDL, AHKRCALKCKFSPDSTLLATCSADQTCKIWRTSNFSLMTE, and TSRG…REYS.

It belongs to the WD repeat LST8 family. Part of the mechanistic target of rapamycin complex 1 (mTORC1) which contains MTOR, MLST8 and RPTOR. Component of the mechanistic target of rapamycin complex 2 (mTORC2), consisting in two heterotretramers composed of MTOR, MLST8, RICTOR and MAPKAP1/SIN1.

It localises to the lysosome membrane. It is found in the cytoplasm. In terms of biological role, subunit of both mTORC1 and mTORC2, which regulates cell growth and survival in response to nutrient and hormonal signals. mTORC1 is activated in response to growth factors or amino acids. In response to nutrients, mTORC1 is recruited to the lysosome membrane and promotes protein, lipid and nucleotide synthesis by phosphorylating several substrates, such as ribosomal protein S6 kinase (RPS6KB1 and RPS6KB2) and EIF4EBP1 (4E-BP1). In the same time, it inhibits catabolic pathways by phosphorylating the autophagy initiation components ULK1 and ATG13, as well as transcription factor TFEB, a master regulators of lysosomal biogenesis and autophagy. The mTORC1 complex is inhibited in response to starvation and amino acid depletion. Within mTORC1, MLST8 interacts directly with MTOR and enhances its kinase activity. In nutrient-poor conditions, stabilizes the MTOR-RPTOR interaction and favors RPTOR-mediated inhibition of MTOR activity. As part of the mTORC2 complex, transduces signals from growth factors to pathways involved in proliferation, cytoskeletal organization, lipogenesis and anabolic output. mTORC2 is also activated by growth factors, but seems to be nutrient-insensitive. In response to growth factors, mTORC2 phosphorylates and activates AGC protein kinase family members, including AKT (AKT1, AKT2 and AKT3), PKC (PRKCA, PRKCB and PRKCE) and SGK1. mTORC2 functions upstream of Rho GTPases to regulate the actin cytoskeleton, probably by activating one or more Rho-type guanine nucleotide exchange factors. mTORC2 promotes the serum-induced formation of stress-fibers or F-actin. Within mTORC2, MLST8 acts as a bridge between MAPKAP1/SIN1 and MTOR. This is Target of rapamycin complex subunit lst8 (mlst8) from Xenopus tropicalis (Western clawed frog).